A 383-amino-acid polypeptide reads, in one-letter code: 1-deoxy-D-xylulose 5-phosphate reductoisomerase (383 aa).

Residues T10, G11, S12, I13, G36, K37, N38, and N122 each contribute to the NADPH site. 1-deoxy-D-xylulose 5-phosphate is bound at residue K123. E124 lines the NADPH pocket. D148 contributes to the Mn(2+) binding site. The 1-deoxy-D-xylulose 5-phosphate site is built by S149, E150, S174, and H197. Position 150 (E150) interacts with Mn(2+). Residue G203 coordinates NADPH. S210, N215, K216, and E219 together coordinate 1-deoxy-D-xylulose 5-phosphate. A Mn(2+)-binding site is contributed by E219.

It belongs to the DXR family. It depends on Mg(2+) as a cofactor. Mn(2+) serves as cofactor.

The catalysed reaction is 2-C-methyl-D-erythritol 4-phosphate + NADP(+) = 1-deoxy-D-xylulose 5-phosphate + NADPH + H(+). Its pathway is isoprenoid biosynthesis; isopentenyl diphosphate biosynthesis via DXP pathway; isopentenyl diphosphate from 1-deoxy-D-xylulose 5-phosphate: step 1/6. Catalyzes the NADPH-dependent rearrangement and reduction of 1-deoxy-D-xylulose-5-phosphate (DXP) to 2-C-methyl-D-erythritol 4-phosphate (MEP). The sequence is that of 1-deoxy-D-xylulose 5-phosphate reductoisomerase from Bacillus licheniformis (strain ATCC 14580 / DSM 13 / JCM 2505 / CCUG 7422 / NBRC 12200 / NCIMB 9375 / NCTC 10341 / NRRL NRS-1264 / Gibson 46).